We begin with the raw amino-acid sequence, 562 residues long: Phosphoenolpyruvate carboxykinase (ATP) (562 aa).

Residue 265-272 coordinates ATP; that stretch reads GLSGTGKT.

It belongs to the phosphoenolpyruvate carboxykinase (ATP) family.

It catalyses the reaction oxaloacetate + ATP = phosphoenolpyruvate + ADP + CO2. Its pathway is carbohydrate biosynthesis; gluconeogenesis. This Dictyostelium discoideum (Social amoeba) protein is Phosphoenolpyruvate carboxykinase (ATP) (pckA).